The sequence spans 238 residues: Heme oxygenase 1 (238 aa).

Belongs to the heme oxygenase family.

It catalyses the reaction heme b + 3 reduced [NADPH--hemoprotein reductase] + 3 O2 = biliverdin IXalpha + CO + Fe(2+) + 3 oxidized [NADPH--hemoprotein reductase] + 3 H2O + H(+). Functionally, catalyzes the opening of the heme ring with the release of iron. Key enzyme in the synthesis of the chromophoric part of the photosynthetic antennae. Upon overexpression in E.coli with PCB:ferredoxin oxidoreductase, CpeS and either CpcB or PecB permits synthesis of phycocyanin-coupled CpcB or PecB. The polypeptide is Heme oxygenase 1 (pbsA1) (Nostoc sp. (strain PCC 7120 / SAG 25.82 / UTEX 2576)).